A 78-amino-acid chain; its full sequence is Ferritin light chain (78 aa).

Residues 1–59 enclose the Ferritin-like diiron domain; that stretch reads EAALHLEKGLNQALVDLHALGSARADPHLCDFLENHFLDEEVKLIKKMGDHLTNLRRLS.

Belongs to the ferritin family. In terms of assembly, oligomer of 24 subunits. There are two types of subunits: L (light) chain and H (heavy) chain. The major chain can be light or heavy, depending on the species and tissue type. The functional molecule forms a roughly spherical shell with a diameter of 12 nm and contains a central cavity into which the insoluble mineral iron core is deposited. Interacts with NCOA4.

It is found in the cytoplasmic vesicle. It localises to the autophagosome. The protein resides in the cytoplasm. The protein localises to the autolysosome. Functionally, stores iron in a soluble, non-toxic, readily available form. Important for iron homeostasis. Iron is taken up in the ferrous form and deposited as ferric hydroxides after oxidation. Also plays a role in delivery of iron to cells. Mediates iron uptake in capsule cells of the developing kidney. Delivery to lysosomes by the cargo receptor NCOA4 for autophagic degradation and release or iron. The chain is Ferritin light chain (FTL) from Sus scrofa (Pig).